The following is a 490-amino-acid chain: uncharacterized protein (490 aa).

Positions 1–19 (MSITSVSLYVYLICAGGHA) are cleaved as a signal peptide.

The protein belongs to the mimivirus L137 family.

This is an uncharacterized protein from Acanthamoeba polyphaga (Amoeba).